The following is a 73-amino-acid chain: DNA-directed RNA polymerase subunit omega (73 aa).

This sequence belongs to the RNA polymerase subunit omega family. In terms of assembly, the RNAP catalytic core consists of 2 alpha, 1 beta, 1 beta' and 1 omega subunit. When a sigma factor is associated with the core the holoenzyme is formed, which can initiate transcription.

It catalyses the reaction RNA(n) + a ribonucleoside 5'-triphosphate = RNA(n+1) + diphosphate. Promotes RNA polymerase assembly. Latches the N- and C-terminal regions of the beta' subunit thereby facilitating its interaction with the beta and alpha subunits. The sequence is that of DNA-directed RNA polymerase subunit omega from Lactobacillus delbrueckii subsp. bulgaricus (strain ATCC BAA-365 / Lb-18).